An 89-amino-acid chain; its full sequence is Small ribosomal subunit protein uS15 (89 aa).

This sequence belongs to the universal ribosomal protein uS15 family. As to quaternary structure, part of the 30S ribosomal subunit. Forms a bridge to the 50S subunit in the 70S ribosome, contacting the 23S rRNA.

Its function is as follows. One of the primary rRNA binding proteins, it binds directly to 16S rRNA where it helps nucleate assembly of the platform of the 30S subunit by binding and bridging several RNA helices of the 16S rRNA. Functionally, forms an intersubunit bridge (bridge B4) with the 23S rRNA of the 50S subunit in the ribosome. The polypeptide is Small ribosomal subunit protein uS15 (Rhodospirillum centenum (strain ATCC 51521 / SW)).